The sequence spans 118 residues: uncharacterized protein (118 aa).

The interval 98–118 (KGKGNEGREEAEEPLEEPEEG) is disordered. The span at 106–118 (EEAEEPLEEPEEG) shows a compositional bias: acidic residues.

This sequence belongs to the UPF0440 family.

This is an uncharacterized protein from Pyrococcus abyssi (strain GE5 / Orsay).